Consider the following 244-residue polypeptide: uncharacterized protein (244 aa).

The HTH gntR-type domain maps to 12-80; that stretch reads VALWRQIADR…QGRGTMIERK (69 aa). A DNA-binding region (H-T-H motif) is located at residues 40 to 59; sequence ETALAAEFGVNRHTVRSALA.

This is an uncharacterized protein from Rhizobium meliloti (strain 1021) (Ensifer meliloti).